Consider the following 362-residue polypeptide: Protein ABHD12B (362 aa).

The protein belongs to the serine esterase family.

The chain is Protein ABHD12B from Homo sapiens (Human).